Reading from the N-terminus, the 123-residue chain is Small ribosomal subunit protein uS12c (123 aa).

Residues 1–20 are compositionally biased toward polar residues; it reads MPTIQQLIRNTRQPTQNRTK. The disordered stretch occupies residues 1–27; sequence MPTIQQLIRNTRQPTQNRTKSPALKAC.

Belongs to the universal ribosomal protein uS12 family. Part of the 30S ribosomal subunit.

It localises to the plastid. It is found in the chloroplast. Its function is as follows. With S4 and S5 plays an important role in translational accuracy. Located at the interface of the 30S and 50S subunits. The chain is Small ribosomal subunit protein uS12c (rps12) from Zygnema circumcarinatum (Green alga).